An 84-amino-acid polypeptide reads, in one-letter code: MAHKKGVGSSRNGRDSFSKRLGVKLFGGQIAKPGSIIIRQRGTKHHPKKNVYMGKDHTIHSLIYGKILFKKTNKKKSFISVIPI.

Belongs to the bacterial ribosomal protein bL27 family.

In Karelsulcia muelleri (strain GWSS) (Sulcia muelleri), this protein is Large ribosomal subunit protein bL27.